The chain runs to 106 residues: Probable glutaredoxin (106 aa).

Residues I8–Q106 enclose the Glutaredoxin domain. C28 and C31 form a disulfide bridge.

Belongs to the glutaredoxin family.

It localises to the virion. The sequence is that of Probable glutaredoxin from Acanthamoeba polyphaga mimivirus (APMV).